Consider the following 219-residue polypeptide: ATP synthase delta chain, chloroplastic (219 aa).

A chloroplast-targeting transit peptide spans 1–33 (MLAAKSIAGPRAFKASAVRAAPKAGRRTVVVMA).

It belongs to the ATPase delta chain family. In terms of assembly, F-type ATPases have 2 components, F(1) - the catalytic core - and F(0) - the membrane proton channel. F(1) has five subunits: alpha(3), beta(3), gamma(1), delta(1), epsilon(1). F(0) has four main subunits: a(1), b(1), b'(1) and c(10-14). The alpha and beta chains form an alternating ring which encloses part of the gamma chain. F(1) is attached to F(0) by a central stalk formed by the gamma and epsilon chains, while a peripheral stalk is formed by the delta, b and b' chains.

It localises to the plastid. It is found in the chloroplast thylakoid membrane. Functionally, f(1)F(0) ATP synthase produces ATP from ADP in the presence of a proton or sodium gradient. F-type ATPases consist of two structural domains, F(1) containing the extramembraneous catalytic core and F(0) containing the membrane proton channel, linked together by a central stalk and a peripheral stalk. During catalysis, ATP synthesis in the catalytic domain of F(1) is coupled via a rotary mechanism of the central stalk subunits to proton translocation. Its function is as follows. This protein seems to be part of the stalk that links CF(0) to CF(1). It either transmits conformational changes from CF(0) into CF(1) or is implicated in proton conduction. The chain is ATP synthase delta chain, chloroplastic from Chlamydomonas reinhardtii (Chlamydomonas smithii).